The following is a 214-amino-acid chain: Leucyl/phenylalanyl-tRNA--protein transferase (214 aa).

This sequence belongs to the L/F-transferase family.

Its subcellular location is the cytoplasm. It carries out the reaction N-terminal L-lysyl-[protein] + L-leucyl-tRNA(Leu) = N-terminal L-leucyl-L-lysyl-[protein] + tRNA(Leu) + H(+). The enzyme catalyses N-terminal L-arginyl-[protein] + L-leucyl-tRNA(Leu) = N-terminal L-leucyl-L-arginyl-[protein] + tRNA(Leu) + H(+). The catalysed reaction is L-phenylalanyl-tRNA(Phe) + an N-terminal L-alpha-aminoacyl-[protein] = an N-terminal L-phenylalanyl-L-alpha-aminoacyl-[protein] + tRNA(Phe). Functions in the N-end rule pathway of protein degradation where it conjugates Leu, Phe and, less efficiently, Met from aminoacyl-tRNAs to the N-termini of proteins containing an N-terminal arginine or lysine. This Cereibacter sphaeroides (strain KD131 / KCTC 12085) (Rhodobacter sphaeroides) protein is Leucyl/phenylalanyl-tRNA--protein transferase.